The following is a 322-amino-acid chain: MTASPSKLAQLRELSVVVADTGDYDAIKRLKPVDCTTNPTLVKKALDLPVYADLIERELAWGREHGGDDRTATVNEVADRLTIGVGVKLAELVPGRVSTEVDADLAHDTQATIAKARKFVAMYAERGVSKDKILIKIAATWEGIEAARQLQKEGIDCNLTLIFNRSQALACAEAGVFLISPFVGRILDYYVAQGQTPASIDEDPGVVFVRTVYNEFKQRGSSTVVMGASFRSTAQIEALAGCDRLTISPDLLEKLDAEHGELPRKLSPAKADNAQFTPIDSDSFASGLAADPMATEKLAGGIDTFAKDLHALRKTIADKLAG.

Residue K136 is the Schiff-base intermediate with substrate of the active site.

This sequence belongs to the transaldolase family. Type 1 subfamily. Homodimer.

The protein resides in the cytoplasm. It catalyses the reaction D-sedoheptulose 7-phosphate + D-glyceraldehyde 3-phosphate = D-erythrose 4-phosphate + beta-D-fructose 6-phosphate. It participates in carbohydrate degradation; pentose phosphate pathway; D-glyceraldehyde 3-phosphate and beta-D-fructose 6-phosphate from D-ribose 5-phosphate and D-xylulose 5-phosphate (non-oxidative stage): step 2/3. Its function is as follows. Transaldolase is important for the balance of metabolites in the pentose-phosphate pathway. This is Transaldolase from Xanthomonas euvesicatoria pv. vesicatoria (strain 85-10) (Xanthomonas campestris pv. vesicatoria).